The sequence spans 531 residues: Apolipoprotein N-acyltransferase (531 aa).

The next 7 helical transmembrane spans lie at 8–28 (IILL…LLAM), 34–54 (FGIF…IDGV), 74–94 (WSFG…AFLV), 105–125 (LAVV…VLVA), 128–148 (LWSD…VAEW), 178–198 (VLNV…PALI), and 206–226 (VGLA…YYRL). The CN hydrolase domain maps to 243 to 493 (VQPVIDQAKK…KGVTDAILPG (251 aa)). Glu287 functions as the Proton acceptor in the catalytic mechanism. Lys351 is a catalytic residue. Catalysis depends on Cys405, which acts as the Nucleophile. Residues 501-521 (SMLRGRIFWFTGVFLLLVAAI) form a helical membrane-spanning segment.

Belongs to the CN hydrolase family. Apolipoprotein N-acyltransferase subfamily.

It localises to the cell inner membrane. It carries out the reaction N-terminal S-1,2-diacyl-sn-glyceryl-L-cysteinyl-[lipoprotein] + a glycerophospholipid = N-acyl-S-1,2-diacyl-sn-glyceryl-L-cysteinyl-[lipoprotein] + a 2-acyl-sn-glycero-3-phospholipid + H(+). It functions in the pathway protein modification; lipoprotein biosynthesis (N-acyl transfer). Its function is as follows. Catalyzes the phospholipid dependent N-acylation of the N-terminal cysteine of apolipoprotein, the last step in lipoprotein maturation. The sequence is that of Apolipoprotein N-acyltransferase from Sinorhizobium fredii (strain NBRC 101917 / NGR234).